Here is a 555-residue protein sequence, read N- to C-terminus: Glutamine--tRNA ligase (555 aa).

The short motif at 34 to 44 is the 'HIGH' region element; that stretch reads PEPNGYLHIGH. Residues 35 to 37 and 41 to 47 each bind ATP; these read EPN and HIGHAKS. The L-glutamine site is built by aspartate 67 and tyrosine 212. Residues threonine 231, 261–262, and 269–271 each bind ATP; these read RL and MSK. Positions 268 to 272 match the 'KMSKS' region motif; the sequence is VMSKR.

It belongs to the class-I aminoacyl-tRNA synthetase family. Monomer.

Its subcellular location is the cytoplasm. It carries out the reaction tRNA(Gln) + L-glutamine + ATP = L-glutaminyl-tRNA(Gln) + AMP + diphosphate. The chain is Glutamine--tRNA ligase from Proteus mirabilis (strain HI4320).